A 311-amino-acid polypeptide reads, in one-letter code: Small ribosomal subunit biogenesis GTPase RsgA (311 aa).

Residues 88 to 246 (SKEKEQVIAA…VIDTPGIREF (159 aa)) enclose the CP-type G domain. GTP is bound by residues 137–140 (NKID) and 188–196 (GHSGVGKST). Zn(2+) is bound by residues Cys-270, Cys-275, His-277, and Cys-283.

This sequence belongs to the TRAFAC class YlqF/YawG GTPase family. RsgA subfamily. Monomer. Associates with 30S ribosomal subunit, binds 16S rRNA. Zn(2+) serves as cofactor.

The protein resides in the cytoplasm. Functionally, one of several proteins that assist in the late maturation steps of the functional core of the 30S ribosomal subunit. Helps release RbfA from mature subunits. May play a role in the assembly of ribosomal proteins into the subunit. Circularly permuted GTPase that catalyzes slow GTP hydrolysis, GTPase activity is stimulated by the 30S ribosomal subunit. This Chlorobaculum parvum (strain DSM 263 / NCIMB 8327) (Chlorobium vibrioforme subsp. thiosulfatophilum) protein is Small ribosomal subunit biogenesis GTPase RsgA.